The following is a 179-amino-acid chain: Ribosome maturation factor RimM (179 aa).

Residues 95-174 enclose the PRC barrel domain; it reads KDEFFYFDIL…QIFCTQDAFL (80 aa).

The protein belongs to the RimM family. As to quaternary structure, binds ribosomal protein uS19.

The protein localises to the cytoplasm. An accessory protein needed during the final step in the assembly of 30S ribosomal subunit, possibly for assembly of the head region. Essential for efficient processing of 16S rRNA. May be needed both before and after RbfA during the maturation of 16S rRNA. It has affinity for free ribosomal 30S subunits but not for 70S ribosomes. This is Ribosome maturation factor RimM from Campylobacter jejuni subsp. jejuni serotype O:2 (strain ATCC 700819 / NCTC 11168).